Consider the following 215-residue polypeptide: Adenylate kinase (215 aa).

10-15 (GAGKGT) serves as a coordination point for ATP. The tract at residues 30–59 (STGDMLRAAVKAGSPLGQQVKGVMDSGGLV) is NMP. Residues Thr-31, Arg-36, 57-59 (GLV), 85-88 (GFPR), and Gln-92 contribute to the AMP site. Positions 122–159 (GRRVHPASGRVYHTEHNPPKVAGKDDVTGEDLIQREDD) are LID. ATP contacts are provided by residues Arg-123 and 132 to 133 (VY). AMP contacts are provided by Arg-156 and Arg-167. Gly-201 contacts ATP.

This sequence belongs to the adenylate kinase family. As to quaternary structure, monomer.

It is found in the cytoplasm. It carries out the reaction AMP + ATP = 2 ADP. The protein operates within purine metabolism; AMP biosynthesis via salvage pathway; AMP from ADP: step 1/1. Catalyzes the reversible transfer of the terminal phosphate group between ATP and AMP. Plays an important role in cellular energy homeostasis and in adenine nucleotide metabolism. The polypeptide is Adenylate kinase (Pseudomonas paraeruginosa (strain DSM 24068 / PA7) (Pseudomonas aeruginosa (strain PA7))).